Reading from the N-terminus, the 664-residue chain is MAWQSSSKVPDGEFTAVVYRLIRDSRYSEAVQLLSAELQRSSRSRAGLSLLAYCYYRLQEFELAAECYEQLSQMHPELEQYRLYQAQALYKACLYPEATRVTFLLDNPAYQTRVLRLQAAIKYSEGDLPGARSLVEQLLSGEAGEDSGGENDPDGLVNMGCLLYKEGHYEAACSKFLAALQASGYQPDLSYNLALAYYSSRQYAPALKHIADIIERGIRQHPELGVGMTTEGIDVRSVGNTVVLHQTALIEAFNLKAAIEYQLRNFEVAQETLTDMPPRAEEELDPVTLHNQALMNMDAKPTEGFEKLQFLLQQNPFPPETFGNLLLLYCKYEYFDLAADVLAENAHLTYKFLTPYLYDFLDAMITCQTAPEEAFIKLDGLAGMLTEQLRRLTKQVQEARHNRDDEIIKKAMNEYDETLEKYIPVLMAQAKIYWNLENYPMVEKIFRKSVEFCNDHDVWKLNVAHVLFMQENKYKEAIGFYEPIVKKNYDNILSVSAIVLANLCVSYIMTSQNEEAEELMRKIEKEEEQLSYGDPDKKIYHLCIVNLVIGTLYCAKGNYDFGISRVIKSLEPYHKKLGTDTWYYAKRCFLSLLENMSKHMIVLCDGVVQECVQFLEYCELYGRNIPAVLEQPLEEERIHTGKNTVTYESRLLKALIYEVIGWNM.

TPR repeat units follow at residues Asp-11–Ser-44, Arg-45–Leu-78, Pro-153–Gln-186, Asp-188–Gln-220, Thr-393–Ile-423, Pro-424–His-456, and Val-458–Asn-491. The stretch at Tyr-507–Asp-534 forms a coiled coil. Residues Cys-543–Lys-576 form a TPR 8 repeat.

Belongs to the TTC30/dfy-1/fleer family. Interacts wit the IFT B complex component IFT52.

Its subcellular location is the cell projection. It localises to the cilium. Its function is as follows. Required for polyglutamylation of axonemal tubulin. Plays a role in anterograde intraflagellar transport (IFT), the process by which cilia precursors are transported from the base of the cilium to the site of their incorporation at the tip. This Mus musculus (Mouse) protein is Intraflagellar transport protein 70A1 (Ift70a1).